A 508-amino-acid polypeptide reads, in one-letter code: Histidine ammonia-lyase (508 aa).

A cross-link (5-imidazolinone (Ala-Gly)) is located at residues 143–145 (ASG). The residue at position 144 (S144) is a 2,3-didehydroalanine (Ser).

This sequence belongs to the PAL/histidase family. Post-translationally, contains an active site 4-methylidene-imidazol-5-one (MIO), which is formed autocatalytically by cyclization and dehydration of residues Ala-Ser-Gly.

The protein localises to the cytoplasm. The enzyme catalyses L-histidine = trans-urocanate + NH4(+). The protein operates within amino-acid degradation; L-histidine degradation into L-glutamate; N-formimidoyl-L-glutamate from L-histidine: step 1/3. This Anaeromyxobacter sp. (strain K) protein is Histidine ammonia-lyase.